A 516-amino-acid polypeptide reads, in one-letter code: Flavonoid 3',5'-hydroxylase (516 aa).

Residue cysteine 453 participates in heme binding.

Belongs to the cytochrome P450 family. Requires heme as cofactor.

The enzyme catalyses a 3',5'-unsubstituted flavanone + 2 reduced [NADPH--hemoprotein reductase] + 2 O2 = a 3',5'-dihydroxyflavanone + 2 oxidized [NADPH--hemoprotein reductase] + 2 H2O + 2 H(+). The protein operates within pigment biosynthesis; anthocyanin biosynthesis. Catalyzes the 3'5'-hydroxylation of naringenin and eriodictyol to form 5,7,3,'4',5'-pentahydroxyflavanone and 3',5'-hydroxylation of dihydrokaempferol and dihydroquercetin to form dihydromyricetin. In Gentiana triflora (Clustered gentian), this protein is Flavonoid 3',5'-hydroxylase (CYP75A4).